Consider the following 894-residue polypeptide: Alanine--tRNA ligase (894 aa).

The Zn(2+) site is built by H569, H573, C683, and H687.

It belongs to the class-II aminoacyl-tRNA synthetase family. It depends on Zn(2+) as a cofactor.

It localises to the cytoplasm. It carries out the reaction tRNA(Ala) + L-alanine + ATP = L-alanyl-tRNA(Ala) + AMP + diphosphate. Its function is as follows. Catalyzes the attachment of alanine to tRNA(Ala) in a two-step reaction: alanine is first activated by ATP to form Ala-AMP and then transferred to the acceptor end of tRNA(Ala). Also edits incorrectly charged Ser-tRNA(Ala) and Gly-tRNA(Ala) via its editing domain. The protein is Alanine--tRNA ligase of Chloroflexus aurantiacus (strain ATCC 29366 / DSM 635 / J-10-fl).